The primary structure comprises 664 residues: MKRRNADCSKLRRPLKRNRITEGIYGSTFLYLKFLVVWALVLLADFVVEFRFEYLWPFWLFIRSVYDSFRYQGLAFSVFFVCVAFTSNIICLLFIPIQWLFFAASTYVWVQYVWHTERGVCLPTVSLWILFVYIEAAIRFKDLKNFHVDLCRPFAAHCIGYPVVTLGFGFKSYVSYKMRLRKQKEVQKENEFYMQLLQQALPPEQQMLQKQEKEAEEAAKGLPDMDSSILIHHNGGIPANKKLSTTLPEIEYREKGKEKDKDAKKHNLGINNNNILQPVDSKIQEIEYMENHINSKRLNNDLVGSTENLLKEDSCTASSKNYKNASGVVNSSPRSHSATNGSIPSSSSKNEKKQKCTSKSPSTHKDLMENCIPNNQLSKPDALVRLEQDIKKLKADLQASRQVEQELRSQISSLSSTERGIRSEMGQLRQENELLQNKLHNAVQMKQKDKQNISQLEKKLKAEQEARSFVEKQLMEEKKRKKLEEATAARAVAFAAASRGECTETLRNRIRELEAEGKKLTMDMKVKEDQIRELELKVQELRKYKENEKDTEVLMSALSAMQDKTQHLENSLSAETRIKLDLFSALGDAKRQLEIAQGQILQKDQEIKDLKQKIAEVMAVMPSITYSAATSPLSPVSPHYSSKFVETSPSGLDPNASVYQPLKK.

4 helical membrane-spanning segments follow: residues 28 to 48 (TFLY…DFVV), 75 to 95 (AFSV…LLFI), 120 to 140 (VCLP…AIRF), and 154 to 174 (FAAH…KSYV). The segment covering 253–265 (REKGKEKDKDAKK) has biased composition (basic and acidic residues). Residues 253 to 274 (REKGKEKDKDAKKHNLGINNNN) form a disordered region. Serine 305 carries the phosphoserine modification. Residues 320 to 348 (KNYKNASGVVNSSPRSHSATNGSIPSSSS) are compositionally biased toward polar residues. Residues 320-375 (KNYKNASGVVNSSPRSHSATNGSIPSSSSKNEKKQKCTSKSPSTHKDLMENCIPNN) are disordered. A glycan (N-linked (GlcNAc...) asparagine) is linked at asparagine 324. The residue at position 332 (serine 332) is a Phosphoserine. Asparagine 340 and asparagine 452 each carry an N-linked (GlcNAc...) asparagine glycan. Residues 630–664 (TSPLSPVSPHYSSKFVETSPSGLDPNASVYQPLKK) are disordered. 2 positions are modified to phosphoserine: serine 631 and serine 634. A glycan (N-linked (GlcNAc...) asparagine) is linked at asparagine 655.

It belongs to the macoilin family.

The protein resides in the rough endoplasmic reticulum membrane. It localises to the nucleus membrane. Plays a role in the regulation of neuronal activity. The protein is Macoilin (MACO1) of Pan troglodytes (Chimpanzee).